Here is a 374-residue protein sequence, read N- to C-terminus: Anhydro-N-acetylmuramic acid kinase (374 aa).

12–19 (GTSLDGVD) provides a ligand contact to ATP.

This sequence belongs to the anhydro-N-acetylmuramic acid kinase family.

It catalyses the reaction 1,6-anhydro-N-acetyl-beta-muramate + ATP + H2O = N-acetyl-D-muramate 6-phosphate + ADP + H(+). Its pathway is amino-sugar metabolism; 1,6-anhydro-N-acetylmuramate degradation. It participates in cell wall biogenesis; peptidoglycan recycling. Catalyzes the specific phosphorylation of 1,6-anhydro-N-acetylmuramic acid (anhMurNAc) with the simultaneous cleavage of the 1,6-anhydro ring, generating MurNAc-6-P. Is required for the utilization of anhMurNAc either imported from the medium or derived from its own cell wall murein, and thus plays a role in cell wall recycling. The polypeptide is Anhydro-N-acetylmuramic acid kinase (Escherichia fergusonii (strain ATCC 35469 / DSM 13698 / CCUG 18766 / IAM 14443 / JCM 21226 / LMG 7866 / NBRC 102419 / NCTC 12128 / CDC 0568-73)).